We begin with the raw amino-acid sequence, 456 residues long: MSNSAMSVVILAAGKGTRMYSDLPKVLHKLAGKPMVQHVIDAAMTTGAQHVHLVYGHGGDLLKHELTDPALNWVLQAEQLGTGHAMQQAAPYFADDEDILMLYGDVPLISSQTLGRLRQTKPQGGIGLLTVKLDDPTGYGRIVRENGAVVGIVEHKDASEEQRQINEINTGILIANGKDLKRWLSQLNNNNAQGEFYITDIIAMAAEEGQRVEAVHPERLSEVEGVNNRLQLSALERVYQREQADRLLLAGVMLLDPARFDLRGELTHGRDVVIDVNVVVEGNVKLGNRVKIGAGCVIKNSIIGDDCEISPYSVLEDAVLDAECTVGPFARLRPGSELAEGAHVGNFVELKKARLGKGSKAGHLSYLGDADIGSGVNIGAGTITCNYDGANKHKTVIGDDVFVGSDSQLVAPVSVANGATIGAGTTVTHDVAENELVVGRVKQRHISGWQRPVKKK.

The tract at residues Met-1–Arg-229 is pyrophosphorylase. Residues Leu-11 to Gly-14, Lys-25, Gln-76, Gly-81 to Thr-82, Tyr-103 to Asp-105, Gly-140, Glu-154, Asn-169, and Asn-227 each bind UDP-N-acetyl-alpha-D-glucosamine. Asp-105 contacts Mg(2+). Asn-227 contributes to the Mg(2+) binding site. The interval Leu-230–Ala-250 is linker. Positions Gly-251 to Lys-456 are N-acetyltransferase. UDP-N-acetyl-alpha-D-glucosamine contacts are provided by Arg-333 and Lys-351. The active-site Proton acceptor is His-363. 2 residues coordinate UDP-N-acetyl-alpha-D-glucosamine: Tyr-366 and Asn-377. Residues Ala-380, Asn-386–Tyr-387, Ser-405, Ala-423, and Arg-440 each bind acetyl-CoA.

This sequence in the N-terminal section; belongs to the N-acetylglucosamine-1-phosphate uridyltransferase family. The protein in the C-terminal section; belongs to the transferase hexapeptide repeat family. In terms of assembly, homotrimer. Mg(2+) serves as cofactor.

It localises to the cytoplasm. The enzyme catalyses alpha-D-glucosamine 1-phosphate + acetyl-CoA = N-acetyl-alpha-D-glucosamine 1-phosphate + CoA + H(+). It catalyses the reaction N-acetyl-alpha-D-glucosamine 1-phosphate + UTP + H(+) = UDP-N-acetyl-alpha-D-glucosamine + diphosphate. Its pathway is nucleotide-sugar biosynthesis; UDP-N-acetyl-alpha-D-glucosamine biosynthesis; N-acetyl-alpha-D-glucosamine 1-phosphate from alpha-D-glucosamine 6-phosphate (route II): step 2/2. The protein operates within nucleotide-sugar biosynthesis; UDP-N-acetyl-alpha-D-glucosamine biosynthesis; UDP-N-acetyl-alpha-D-glucosamine from N-acetyl-alpha-D-glucosamine 1-phosphate: step 1/1. It functions in the pathway bacterial outer membrane biogenesis; LPS lipid A biosynthesis. In terms of biological role, catalyzes the last two sequential reactions in the de novo biosynthetic pathway for UDP-N-acetylglucosamine (UDP-GlcNAc). The C-terminal domain catalyzes the transfer of acetyl group from acetyl coenzyme A to glucosamine-1-phosphate (GlcN-1-P) to produce N-acetylglucosamine-1-phosphate (GlcNAc-1-P), which is converted into UDP-GlcNAc by the transfer of uridine 5-monophosphate (from uridine 5-triphosphate), a reaction catalyzed by the N-terminal domain. The sequence is that of Bifunctional protein GlmU from Pectobacterium carotovorum subsp. carotovorum (strain PC1).